The following is a 542-amino-acid chain: CTP synthase (542 aa).

An amidoligase domain region spans residues 1–265 (MTRYIFVTGG…DQLVIERFGL (265 aa)). Position 13 (serine 13) interacts with CTP. Serine 13 provides a ligand contact to UTP. Residues 14–19 (SLGKGI) and aspartate 71 contribute to the ATP site. Positions 71 and 139 each coordinate Mg(2+). CTP is bound by residues 146–148 (DIE), 186–191 (KTKPTQ), and lysine 222. Residues 186 to 191 (KTKPTQ) and lysine 222 contribute to the UTP site. One can recognise a Glutamine amidotransferase type-1 domain in the interval 290–541 (TIAMVGKYME…VEAALANKKG (252 aa)). L-glutamine is bound at residue glycine 351. Residue cysteine 378 is the Nucleophile; for glutamine hydrolysis of the active site. Residues 379 to 382 (LGMQ), glutamate 402, and arginine 469 contribute to the L-glutamine site. Residues histidine 514 and glutamate 516 contribute to the active site.

This sequence belongs to the CTP synthase family. Homotetramer.

It catalyses the reaction UTP + L-glutamine + ATP + H2O = CTP + L-glutamate + ADP + phosphate + 2 H(+). The enzyme catalyses L-glutamine + H2O = L-glutamate + NH4(+). It carries out the reaction UTP + NH4(+) + ATP = CTP + ADP + phosphate + 2 H(+). It participates in pyrimidine metabolism; CTP biosynthesis via de novo pathway; CTP from UDP: step 2/2. Allosterically activated by GTP, when glutamine is the substrate; GTP has no effect on the reaction when ammonia is the substrate. The allosteric effector GTP functions by stabilizing the protein conformation that binds the tetrahedral intermediate(s) formed during glutamine hydrolysis. Inhibited by the product CTP, via allosteric rather than competitive inhibition. Functionally, catalyzes the ATP-dependent amination of UTP to CTP with either L-glutamine or ammonia as the source of nitrogen. Regulates intracellular CTP levels through interactions with the four ribonucleotide triphosphates. This Marinobacter nauticus (strain ATCC 700491 / DSM 11845 / VT8) (Marinobacter aquaeolei) protein is CTP synthase.